The primary structure comprises 433 residues: Serine--tRNA ligase (433 aa).

236-238 (TAE) contributes to the L-serine binding site. Position 267–269 (267–269 (RSE)) interacts with ATP. Position 290 (Glu-290) interacts with L-serine. 354 to 357 (EISS) is an ATP binding site. Ser-394 is an L-serine binding site.

This sequence belongs to the class-II aminoacyl-tRNA synthetase family. Type-1 seryl-tRNA synthetase subfamily. Homodimer. The tRNA molecule binds across the dimer.

It is found in the cytoplasm. The enzyme catalyses tRNA(Ser) + L-serine + ATP = L-seryl-tRNA(Ser) + AMP + diphosphate + H(+). It carries out the reaction tRNA(Sec) + L-serine + ATP = L-seryl-tRNA(Sec) + AMP + diphosphate + H(+). Its pathway is aminoacyl-tRNA biosynthesis; selenocysteinyl-tRNA(Sec) biosynthesis; L-seryl-tRNA(Sec) from L-serine and tRNA(Sec): step 1/1. In terms of biological role, catalyzes the attachment of serine to tRNA(Ser). Is also able to aminoacylate tRNA(Sec) with serine, to form the misacylated tRNA L-seryl-tRNA(Sec), which will be further converted into selenocysteinyl-tRNA(Sec). This is Serine--tRNA ligase from Acidiphilium cryptum (strain JF-5).